The sequence spans 909 residues: Protein translocase subunit SecA (909 aa).

ATP contacts are provided by residues Gln-87, 105-109 (GEGKT), and Asp-513. Positions 834–909 (QEEVERMEEQ…KYKQCHGKID (76 aa)) are disordered. Basic and acidic residues predominate over residues 836–853 (EVERMEEQRRAQAEEAAR). Over residues 854–863 (RAQAQHAAAQ) the composition is skewed to low complexity. The span at 874–889 (EGAHQPMVREERKVGR) shows a compositional bias: basic and acidic residues. Zn(2+)-binding residues include Cys-893, Cys-895, Cys-904, and His-905. A compositionally biased stretch (basic residues) spans 899–909 (KKYKQCHGKID).

This sequence belongs to the SecA family. As to quaternary structure, monomer and homodimer. Part of the essential Sec protein translocation apparatus which comprises SecA, SecYEG and auxiliary proteins SecDF-YajC and YidC. It depends on Zn(2+) as a cofactor.

It is found in the cell inner membrane. The protein localises to the cytoplasm. The enzyme catalyses ATP + H2O + cellular proteinSide 1 = ADP + phosphate + cellular proteinSide 2.. Functionally, part of the Sec protein translocase complex. Interacts with the SecYEG preprotein conducting channel. Has a central role in coupling the hydrolysis of ATP to the transfer of proteins into and across the cell membrane, serving both as a receptor for the preprotein-SecB complex and as an ATP-driven molecular motor driving the stepwise translocation of polypeptide chains across the membrane. The protein is Protein translocase subunit SecA of Vibrio campbellii (strain ATCC BAA-1116).